We begin with the raw amino-acid sequence, 383 residues long: Embryonic pepsinogen (383 aa).

A signal peptide spans 1-16 (MRSLALLCAVLALSDG). The 305-residue stretch at 76 to 380 (YYGTISIGTP…DRANNRVGLA (305 aa)) folds into the Peptidase A1 domain. Asp94 is an active-site residue. Cys107 and Cys112 are disulfide-bonded. Residues Asn132 and Asn204 are each glycosylated (N-linked (GlcNAc...) asparagine). Cys267 and Cys271 form a disulfide bridge. Asp276 is an active-site residue. Asn309 carries an N-linked (GlcNAc...) asparagine glycan. The cysteines at positions 310 and 344 are disulfide-linked. N-linked (GlcNAc...) asparagine glycosylation occurs at Asn350.

Belongs to the peptidase A1 family.

In Gallus gallus (Chicken), this protein is Embryonic pepsinogen.